Reading from the N-terminus, the 1613-residue chain is Myosin-IIIa (1613 aa).

The Protein kinase domain occupies 21–287 (WEIIETIGKG…VSDLLKHKFI (267 aa)). Residues 27 to 35 (IGKGTYGKV) and Lys50 contribute to the ATP site. Asp150 acts as the Proton acceptor in catalysis. Positions 338-1052 (KDVDDLATLD…HVEQLNLMRK (715 aa)) constitute a Myosin motor domain. Residues 933 to 955 (LMDLLSKMVVGQPHFVRCIKPNN) form an actin-binding region. IQ domains follow at residues 1054–1083 (ATNK…KRKS) and 1081–1110 (RKSS…MKNT). 2 disordered regions span residues 1136-1168 (VKKQ…TAPF) and 1476-1506 (SGVS…EDST). Positions 1145 to 1161 (PTNESNTSTPNNKESPS) are enriched in low complexity. Residues 1398–1476 (EGVHHSKMVD…RHVSTHQYLS (79 aa)) form an interaction with MORN4 region. Basic residues predominate over residues 1488–1497 (RPPRRPRKPK).

The protein in the C-terminal section; belongs to the TRAFAC class myosin-kinesin ATPase superfamily. Myosin family. In the N-terminal section; belongs to the protein kinase superfamily. STE Ser/Thr protein kinase family. In terms of assembly, interacts with MORN4. Interacts (via C-terminus) with ESPN and ESPNL. In terms of tissue distribution, expressed in the cochlear hair cells (at protein level). Expressed in utricle hair bundles (at protein level).

Its subcellular location is the cytoplasm. The protein localises to the cytoskeleton. It is found in the cell projection. The protein resides in the filopodium tip. It localises to the stereocilium. The catalysed reaction is L-seryl-[protein] + ATP = O-phospho-L-seryl-[protein] + ADP + H(+). It carries out the reaction L-threonyl-[protein] + ATP = O-phospho-L-threonyl-[protein] + ADP + H(+). It catalyses the reaction ATP + H2O = ADP + phosphate + H(+). Functionally, actin-dependent motor protein with a protein kinase activity, playing an essential role in hearing. Probably plays also a role in vision. Required for normal cochlear hair bundle development and hearing. Plays an important role in the early steps of cochlear hair bundle morphogenesis. Influences the number and lengths of stereocilia to be produced and limits the growth of microvilli within the forming auditory hair bundles thereby contributing to the architecture of the hair bundle, including its staircase pattern. Involved in the elongation of actin in stereocilia tips by transporting the actin regulatory factor ESPN to the plus ends of actin filaments. The protein is Myosin-IIIa (Myo3a) of Mus musculus (Mouse).